The chain runs to 913 residues: Protein translocase subunit SecA (913 aa).

ATP contacts are provided by residues glutamine 87, 105–109 (GEGKT), and aspartate 512. Residues cysteine 897, cysteine 899, cysteine 908, and histidine 909 each contribute to the Zn(2+) site.

The protein belongs to the SecA family. In terms of assembly, monomer and homodimer. Part of the essential Sec protein translocation apparatus which comprises SecA, SecYEG and auxiliary proteins SecDF-YajC and YidC. Requires Zn(2+) as cofactor.

It localises to the cell inner membrane. The protein localises to the cytoplasm. It catalyses the reaction ATP + H2O + cellular proteinSide 1 = ADP + phosphate + cellular proteinSide 2.. Functionally, part of the Sec protein translocase complex. Interacts with the SecYEG preprotein conducting channel. Has a central role in coupling the hydrolysis of ATP to the transfer of proteins into and across the cell membrane, serving both as a receptor for the preprotein-SecB complex and as an ATP-driven molecular motor driving the stepwise translocation of polypeptide chains across the membrane. The protein is Protein translocase subunit SecA of Pseudomonas fluorescens (strain ATCC BAA-477 / NRRL B-23932 / Pf-5).